Here is a 297-residue protein sequence, read N- to C-terminus: Quinate/shikimate dehydrogenase (297 aa).

Substrate contacts are provided by lysine 80 and aspartate 116. Residues 141–144, 164–167, lysine 214, 241–244, and glycine 264 each bind NAD(+); these read AGGA, NRRD, and CVYN.

It belongs to the shikimate dehydrogenase family. As to quaternary structure, homodimer.

The enzyme catalyses L-quinate + NAD(+) = 3-dehydroquinate + NADH + H(+). The catalysed reaction is L-quinate + NADP(+) = 3-dehydroquinate + NADPH + H(+). It carries out the reaction shikimate + NADP(+) = 3-dehydroshikimate + NADPH + H(+). It catalyses the reaction shikimate + NAD(+) = 3-dehydroshikimate + NADH + H(+). It functions in the pathway metabolic intermediate biosynthesis; chorismate biosynthesis; chorismate from D-erythrose 4-phosphate and phosphoenolpyruvate: step 4/7. Functionally, the actual biological function of YdiB remains unclear, nor is it known whether 3-dehydroshikimate or quinate represents the natural substrate. Catalyzes the reversible NAD-dependent reduction of both 3-dehydroshikimate (DHSA) and 3-dehydroquinate to yield shikimate (SA) and quinate, respectively. It can use both NAD or NADP for catalysis, however it has higher catalytic efficiency with NAD. In Shigella dysenteriae serotype 1 (strain Sd197), this protein is Quinate/shikimate dehydrogenase.